The primary structure comprises 317 residues: Ribonuclease Z (317 aa).

Residues His-62, His-64, Asp-66, His-67, His-139, Asp-210, and His-268 each coordinate Zn(2+). The active-site Proton acceptor is Asp-66.

This sequence belongs to the RNase Z family. In terms of assembly, homodimer. Zn(2+) is required as a cofactor.

The catalysed reaction is Endonucleolytic cleavage of RNA, removing extra 3' nucleotides from tRNA precursor, generating 3' termini of tRNAs. A 3'-hydroxy group is left at the tRNA terminus and a 5'-phosphoryl group is left at the trailer molecule.. Functionally, zinc phosphodiesterase, which displays some tRNA 3'-processing endonuclease activity. Probably involved in tRNA maturation, by removing a 3'-trailer from precursor tRNA. The polypeptide is Ribonuclease Z (Picosynechococcus sp. (strain ATCC 27264 / PCC 7002 / PR-6) (Agmenellum quadruplicatum)).